A 407-amino-acid polypeptide reads, in one-letter code: Imidazolonepropionase (407 aa).

Fe(3+)-binding residues include His73 and His75. Zn(2+) is bound by residues His73 and His75. Residues Arg82, Tyr145, and His178 each contribute to the 4-imidazolone-5-propanoate site. Residue Tyr145 participates in N-formimidoyl-L-glutamate binding. Residue His243 coordinates Fe(3+). Residue His243 participates in Zn(2+) binding. 4-imidazolone-5-propanoate is bound at residue Gln246. Asp318 contacts Fe(3+). Asp318 is a binding site for Zn(2+). Residues Asn320 and Gly322 each contribute to the N-formimidoyl-L-glutamate site. Thr323 contributes to the 4-imidazolone-5-propanoate binding site.

This sequence belongs to the metallo-dependent hydrolases superfamily. HutI family. The cofactor is Zn(2+). Requires Fe(3+) as cofactor.

The protein localises to the cytoplasm. The catalysed reaction is 4-imidazolone-5-propanoate + H2O = N-formimidoyl-L-glutamate. Its pathway is amino-acid degradation; L-histidine degradation into L-glutamate; N-formimidoyl-L-glutamate from L-histidine: step 3/3. In terms of biological role, catalyzes the hydrolytic cleavage of the carbon-nitrogen bond in imidazolone-5-propanoate to yield N-formimidoyl-L-glutamate. It is the third step in the universal histidine degradation pathway. The protein is Imidazolonepropionase of Serratia proteamaculans (strain 568).